A 147-amino-acid polypeptide reads, in one-letter code: Protein disulfide isomerase-like 5-1 (147 aa).

The signal sequence occupies residues 1–29; that stretch reads MDLAPGRRARLLVALALVVLVALAARSGA. The 108-residue stretch at 30 to 137 folds into the Thioredoxin domain; sequence EVITLTEETF…LKNFVSDEAE (108 aa). Residues C59 and C62 each act as nucleophile in the active site. Residues C59 and C62 are joined by a disulfide bond.

It belongs to the protein disulfide isomerase family.

Functionally, acts as a protein-folding catalyst that interacts with nascent polypeptides to catalyze the formation, isomerization, and reduction or oxidation of disulfide bonds. May play a role in storage protein biogenesis. This chain is Protein disulfide isomerase-like 5-1 (PDIL5-1), found in Oryza sativa subsp. japonica (Rice).